A 569-amino-acid chain; its full sequence is Proline--tRNA ligase (569 aa).

The protein belongs to the class-II aminoacyl-tRNA synthetase family. ProS type 1 subfamily. In terms of assembly, homodimer.

The protein localises to the cytoplasm. The catalysed reaction is tRNA(Pro) + L-proline + ATP = L-prolyl-tRNA(Pro) + AMP + diphosphate. Its function is as follows. Catalyzes the attachment of proline to tRNA(Pro) in a two-step reaction: proline is first activated by ATP to form Pro-AMP and then transferred to the acceptor end of tRNA(Pro). As ProRS can inadvertently accommodate and process non-cognate amino acids such as alanine and cysteine, to avoid such errors it has two additional distinct editing activities against alanine. One activity is designated as 'pretransfer' editing and involves the tRNA(Pro)-independent hydrolysis of activated Ala-AMP. The other activity is designated 'posttransfer' editing and involves deacylation of mischarged Ala-tRNA(Pro). The misacylated Cys-tRNA(Pro) is not edited by ProRS. This Legionella pneumophila (strain Corby) protein is Proline--tRNA ligase.